We begin with the raw amino-acid sequence, 385 residues long: MKNTRVRSIGTKSLLAAVVTAALMATSAYAAVETDAATTGWATQNGGTTGGAKAAKAVEVKNISDFKKALNGTDSSAKIIKVTGPIDISGGKAYTSFDDQKARSQISIPSNTTIIGVGSNGKFTNGSLVIKGVKNVILRNLYIETPVDVAPHYESGDGWNAEWDAAVIDNSTNVWVDHVTISDGSFTDDKYTTKDGEKYVQHDGALDIKKGSDYVTISYSRFELHDKTILIGHSDSNGSQDSGKLRVTFHNNVFDRVTERAPRVRFGSIHAYNNVYLGDVKHSVYPYLYSFGLGTSGSILSESNSFTLSNLKSIDGKNPECSIVKQFNSKVFSDKGSLVNGSTTTKLDTCGLTAYKPTLPYKYSAQTMTSSLATSINNNAGYGKL.

The N-terminal stretch at 1 to 30 is a signal peptide; sequence MKNTRVRSIGTKSLLAAVVTAALMATSAYA. Position 164 (D164) interacts with Ca(2+). The stretch at 177-182 is repeat 1; it reads DHVTIS. Residues 177–218 form a 2 X 6 AA approximate repeats region; it reads DHVTISDGSFTDDKYTTKDGEKYVQHDGALDIKKGSDYVTIS. A Ca(2+)-binding site is contributed by D207. Repeat unit 2 spans residues 213-218; it reads DYVTIS. Residue R260 is part of the active site.

This sequence belongs to the polysaccharide lyase 1 family. PLBC subfamily. It depends on Ca(2+) as a cofactor.

The protein localises to the secreted. The enzyme catalyses Eliminative cleavage of (1-&gt;4)-alpha-D-galacturonan to give oligosaccharides with 4-deoxy-alpha-D-galact-4-enuronosyl groups at their non-reducing ends.. It participates in glycan metabolism; pectin degradation; 2-dehydro-3-deoxy-D-gluconate from pectin: step 2/5. Involved in maceration and soft-rotting of plant tissue. The chain is Pectate lyase E (pelE) from Dickeya chrysanthemi (Pectobacterium chrysanthemi).